Consider the following 125-residue polypeptide: RutC family protein STK_08110 (125 aa).

Belongs to the RutC family.

In Sulfurisphaera tokodaii (strain DSM 16993 / JCM 10545 / NBRC 100140 / 7) (Sulfolobus tokodaii), this protein is RutC family protein STK_08110.